Here is an 85-residue protein sequence, read N- to C-terminus: U4-theraphotoxin-Hhn1g (85 aa).

The signal sequence occupies residues 1-22 (MKVTLIAILTCAAVLVLHTTAA). A propeptide spanning residues 23 to 48 (EELEAESQLMEVGMPDTELAAVDEER) is cleaved from the precursor. Disulfide bonds link Cys-52–Cys-66, Cys-56–Cys-77, and Cys-71–Cys-82.

The protein belongs to the neurotoxin 12 (Hwtx-2) family. 02 (Hwtx-2) subfamily. Expressed by the venom gland.

Its subcellular location is the secreted. Its function is as follows. Postsynaptic neurotoxin. The polypeptide is U4-theraphotoxin-Hhn1g (Cyriopagopus hainanus (Chinese bird spider)).